Reading from the N-terminus, the 634-residue chain is Probable beta-glucosidase C (634 aa).

An N-terminal signal peptide occupies residues M1–A19. N-linked (GlcNAc...) asparagine glycosylation is found at N90, N112, N219, and N270. D337 is a catalytic residue. 4 N-linked (GlcNAc...) asparagine glycosylation sites follow: N360, N476, N484, and N524.

This sequence belongs to the glycosyl hydrolase 3 family.

The protein localises to the secreted. It carries out the reaction Hydrolysis of terminal, non-reducing beta-D-glucosyl residues with release of beta-D-glucose.. It functions in the pathway glycan metabolism; cellulose degradation. Functionally, beta-glucosidases are one of a number of cellulolytic enzymes involved in the degradation of cellulosic biomass. Catalyzes the last step releasing glucose from the inhibitory cellobiose. The polypeptide is Probable beta-glucosidase C (bglC) (Aspergillus flavus (strain ATCC 200026 / FGSC A1120 / IAM 13836 / NRRL 3357 / JCM 12722 / SRRC 167)).